Reading from the N-terminus, the 781-residue chain is LPS-assembly protein LptD (781 aa).

The signal sequence occupies residues 1-24 (MKKNYYTVLSLSILTALYSTSSQA).

The protein belongs to the LptD family. As to quaternary structure, component of the lipopolysaccharide transport and assembly complex. Interacts with LptE and LptA.

It localises to the cell outer membrane. Its function is as follows. Together with LptE, is involved in the assembly of lipopolysaccharide (LPS) at the surface of the outer membrane. This Histophilus somni (strain 129Pt) (Haemophilus somnus) protein is LPS-assembly protein LptD.